The following is a 332-amino-acid chain: L-lactate dehydrogenase A chain (332 aa).

NAD(+) is bound by residues 29–57 (GAVG…MEDK) and Arg99. Substrate-binding residues include Arg106, Asn138, and Arg169. NAD(+) is bound at residue Asn138. His193 serves as the catalytic Proton acceptor. Thr248 lines the substrate pocket.

It belongs to the LDH/MDH superfamily. LDH family. As to quaternary structure, homotetramer.

The protein resides in the cytoplasm. The catalysed reaction is (S)-lactate + NAD(+) = pyruvate + NADH + H(+). Its pathway is fermentation; pyruvate fermentation to lactate; (S)-lactate from pyruvate: step 1/1. Functionally, interconverts simultaneously and stereospecifically pyruvate and lactate with concomitant interconversion of NADH and NAD(+). This Sceloporus undulatus (Eastern fence lizard) protein is L-lactate dehydrogenase A chain (LDHA).